Here is a 395-residue protein sequence, read N- to C-terminus: Acid ceramidase (395 aa).

The signal sequence occupies residues 1 to 21; the sequence is MPGRSCVALVLLAAAVSCAVA. Cysteine 31 and cysteine 340 are oxidised to a cystine. Cysteine 143 functions as the Nucleophile in the catalytic mechanism. Residues asparagine 173, asparagine 195, asparagine 259, asparagine 286, asparagine 342, and asparagine 348 are each glycosylated (N-linked (GlcNAc...) asparagine). A disulfide bridge connects residues cysteine 388 and cysteine 392.

The protein belongs to the acid ceramidase family. As to quaternary structure, heterodimer; disulfide-linked. The heterodimer is composed of the disulfide-linked alpha and beta chains produced by autocatalytic cleavage of the precursor. Isoform 2: May interact with NR5A1 in the nucleus; the direct interaction would negatively regulate NR5A1 transcriptional activity. N-glycosylated. In terms of processing, proteolytically cleaved into two chains alpha and beta that remain associated via a disulfide bond. Cleavage gives rise to a conformation change that activates the enzyme. The same catalytic Cys residue mediates the autoproteolytic cleavage and subsequent hydrolysis of lipid substrates. The beta chain may undergo an additional C-terminal processing. As to expression, broadly expressed with higher expression in heart.

The protein localises to the lysosome. Its subcellular location is the secreted. It localises to the nucleus. It is found in the cytoplasm. It catalyses the reaction an N-acylsphing-4-enine + H2O = sphing-4-enine + a fatty acid. The enzyme catalyses a beta-D-glucosyl-(1&lt;-&gt;1')-N-acylsphing-4-enine + H2O = beta-D-glucosyl-(1&lt;-&gt;1)-sphing-4-enine + a fatty acid. It carries out the reaction a globoside Gb3Cer + H2O = a lysoGb3 + a fatty acid. The catalysed reaction is a globoside Gb3Cer (d18:1(4E)) + H2O = a lysoGb3(d18:1(4E)) + a fatty acid. It catalyses the reaction N-dodecanoylsphing-4-enine + H2O = dodecanoate + sphing-4-enine. The enzyme catalyses N-tetradecanoylsphing-4-enine + H2O = tetradecanoate + sphing-4-enine. It carries out the reaction N-hexadecanoylsphing-4-enine + H2O = sphing-4-enine + hexadecanoate. The catalysed reaction is N-octadecanoylsphing-4-enine + H2O = sphing-4-enine + octadecanoate. It catalyses the reaction N-dodecanoyl-(4R)-hydroxysphinganine + H2O = (4R)-hydroxysphinganine + dodecanoate. The enzyme catalyses N-(dodecanoyl)-sphinganine + H2O = dodecanoate + sphinganine. It carries out the reaction N-(acetyl)-sphing-4-enine + H2O = sphing-4-enine + acetate. The catalysed reaction is N-(hexanoyl)sphing-4-enine + H2O = hexanoate + sphing-4-enine. It catalyses the reaction N-octanoylsphing-4-enine + H2O = octanoate + sphing-4-enine. The enzyme catalyses N-(9Z-octadecenoyl)-sphing-4-enine + H2O = sphing-4-enine + (9Z)-octadecenoate. It carries out the reaction N-dodecanoylethanolamine + H2O = dodecanoate + ethanolamine. It functions in the pathway lipid metabolism; sphingolipid metabolism. Its activity is regulated as follows. Activated by Ca(2+), Mg(2+) and Na(+) cations. Inhibited by Zn(2+). Phosphatidylserine and phosphatidic acid stimulate while cardiolipin, phosphatidylcholine, lysophosphatidylcholine, phosphatidylethanolamine, phosphatidylinositol and sphingomyelin inhibit the reverse ceramide synthase activity. Phosphatidic acid, phosphatidylinositol and C16-ceramide inhibit the ceramidase/hydrolase activity. In terms of biological role, lysosomal ceramidase that hydrolyzes sphingolipid ceramides into sphingosine and free fatty acids at acidic pH. Ceramides, sphingosine, and its phosphorylated form sphingosine-1-phosphate are bioactive lipids that mediate cellular signaling pathways regulating several biological processes including cell proliferation, apoptosis and differentiation. Has a higher catalytic efficiency towards C12-ceramides versus other ceramides. Also catalyzes the reverse reaction allowing the synthesis of ceramides from fatty acids and sphingosine. For the reverse synthetic reaction, the natural sphingosine D-erythro isomer is more efficiently utilized as a substrate compared to D-erythro-dihydrosphingosine and D-erythro-phytosphingosine, while the fatty acids with chain lengths of 12 or 14 carbons are the most efficiently used. Also has an N-acylethanolamine hydrolase activity. By regulating the levels of ceramides, sphingosine and sphingosine-1-phosphate in the epidermis, mediates the calcium-induced differentiation of epidermal keratinocytes. Also indirectly regulates tumor necrosis factor/TNF-induced apoptosis. By regulating the intracellular balance between ceramides and sphingosine, in adrenocortical cells, probably also acts as a regulator of steroidogenesis. May directly regulate steroidogenesis by binding the nuclear receptor NR5A1 and negatively regulating its transcriptional activity. The polypeptide is Acid ceramidase (Homo sapiens (Human)).